The following is a 368-amino-acid chain: Quinolinate synthase (368 aa).

Residues His46 and Ser63 each contribute to the iminosuccinate site. Cys110 contacts [4Fe-4S] cluster. Iminosuccinate-binding positions include 141 to 143 and Ser162; that span reads YVN. Cys230 provides a ligand contact to [4Fe-4S] cluster. Residues 256–258 and Thr273 contribute to the iminosuccinate site; that span reads HPE. Residue Cys320 participates in [4Fe-4S] cluster binding.

It belongs to the quinolinate synthase family. Type 3 subfamily. [4Fe-4S] cluster serves as cofactor.

It localises to the cytoplasm. It carries out the reaction iminosuccinate + dihydroxyacetone phosphate = quinolinate + phosphate + 2 H2O + H(+). It functions in the pathway cofactor biosynthesis; NAD(+) biosynthesis; quinolinate from iminoaspartate: step 1/1. In terms of biological role, catalyzes the condensation of iminoaspartate with dihydroxyacetone phosphate to form quinolinate. In Bacillus cytotoxicus (strain DSM 22905 / CIP 110041 / 391-98 / NVH 391-98), this protein is Quinolinate synthase.